Reading from the N-terminus, the 155-residue chain is Ribosome maturation factor RimP (155 aa).

This sequence belongs to the RimP family.

It localises to the cytoplasm. In terms of biological role, required for maturation of 30S ribosomal subunits. In Gloeothece citriformis (strain PCC 7424) (Cyanothece sp. (strain PCC 7424)), this protein is Ribosome maturation factor RimP.